Consider the following 237-residue polypeptide: MAKRSKAYLAAAEKVDRTKLYSPLAAARLAKETATTKTDATVEVAVRLGVDPRKADQMVRGTVNLPHGTGKTARVIVFAAGEKAAEAEAAGADAVGAEDLIERIQGGWLDFDAAIATPDQMAKVGRIARVLGPRGLMPNPKTGTVTTDVAKAVSDIKGGKINFRVDKQANLHFVIGKASFDEAKLVENYGAALDEILRAKPSTAKGRYVKKVTVSTNTGPGIPVDPNRTRNLLDEDA.

Belongs to the universal ribosomal protein uL1 family. As to quaternary structure, part of the 50S ribosomal subunit.

Functionally, binds directly to 23S rRNA. The L1 stalk is quite mobile in the ribosome, and is involved in E site tRNA release. Protein L1 is also a translational repressor protein, it controls the translation of the L11 operon by binding to its mRNA. The polypeptide is Large ribosomal subunit protein uL1 (Nocardia farcinica (strain IFM 10152)).